Reading from the N-terminus, the 498-residue chain is Transcription factor kayak (498 aa).

Positions 108-127 are enriched in polar residues; that stretch reads ASLGQGSESEDSNASYNDTQ. Disordered stretches follow at residues 108 to 144 and 177 to 234; these read ASLG…HTDS and GSAS…KRRV. Composition is skewed to low complexity over residues 135–144 and 177–191; these read TDTSSAHTDS and GSAS…TSNT. A bZIP domain is found at 212-275; that stretch reads EQKRAVRRER…KQLEYLLATH (64 aa). The basic motif stretch occupies residues 214-233; that stretch reads KRAVRRERNKQAAARCRKRR. The leucine-zipper stretch occupies residues 240–247; sequence LTEEVEQL. Positions 304 to 325 are enriched in low complexity; the sequence is AGSSGSGASSHHNHNSNDSSNG. Disordered regions lie at residues 304 to 345 and 465 to 498; these read AGSS…SPLD and TPVS…LVSL. Polar residues predominate over residues 333–343; it reads TLNSTGRSNSP. Ser342 is modified (phosphoserine).

It belongs to the bZIP family. Fos subfamily. In terms of assembly, homodimer. Heterodimer with Jra. The kay-Jra heterodimer binds more stably to the AP-1 site than either of the two proteins alone.

It is found in the nucleus. In terms of biological role, developmentally regulated transcription factor AP-1 binds and recognizes the enhancer DNA sequence: 5'-TGA[CG]TCA-3'. May play a role in the function or determination of a particular subset of cells in the developing embryo. It is able to carry out its function either independently of or in conjunction with Jra. This Drosophila simulans (Fruit fly) protein is Transcription factor kayak.